A 259-amino-acid polypeptide reads, in one-letter code: UPF0246 protein Aave_1172 (259 aa).

The protein belongs to the UPF0246 family.

This Paracidovorax citrulli (strain AAC00-1) (Acidovorax citrulli) protein is UPF0246 protein Aave_1172.